The sequence spans 194 residues: uncharacterized protein (194 aa).

A disordered region spans residues 25–156; sequence PSWACRRGGP…ESPLGTLPCS (132 aa). Residues 43 to 57 are compositionally biased toward polar residues; sequence GPSTVPVTPTAGSCQ. Over residues 104–113 the composition is skewed to low complexity; the sequence is SSSPGPSFHL.

This is an uncharacterized protein from Homo sapiens (Human).